The sequence spans 202 residues: Small ribosomal subunit protein uS4 (202 aa).

The 63-residue stretch at 90-152 folds into the S4 RNA-binding domain; it reads MRLDNTVFRL…ERSRRLVETN (63 aa).

This sequence belongs to the universal ribosomal protein uS4 family. In terms of assembly, part of the 30S ribosomal subunit. Contacts protein S5. The interaction surface between S4 and S5 is involved in control of translational fidelity.

One of the primary rRNA binding proteins, it binds directly to 16S rRNA where it nucleates assembly of the body of the 30S subunit. Functionally, with S5 and S12 plays an important role in translational accuracy. In Thermosynechococcus vestitus (strain NIES-2133 / IAM M-273 / BP-1), this protein is Small ribosomal subunit protein uS4.